Reading from the N-terminus, the 350-residue chain is S-adenosylmethionine:tRNA ribosyltransferase-isomerase (350 aa).

The protein belongs to the QueA family. Monomer.

The protein localises to the cytoplasm. The enzyme catalyses 7-aminomethyl-7-carbaguanosine(34) in tRNA + S-adenosyl-L-methionine = epoxyqueuosine(34) in tRNA + adenine + L-methionine + 2 H(+). Its pathway is tRNA modification; tRNA-queuosine biosynthesis. In terms of biological role, transfers and isomerizes the ribose moiety from AdoMet to the 7-aminomethyl group of 7-deazaguanine (preQ1-tRNA) to give epoxyqueuosine (oQ-tRNA). This chain is S-adenosylmethionine:tRNA ribosyltransferase-isomerase, found in Aliivibrio fischeri (strain ATCC 700601 / ES114) (Vibrio fischeri).